The following is a 353-amino-acid chain: Protein RecA (353 aa).

67–74 contributes to the ATP binding site; the sequence is GPESSGKT.

Belongs to the RecA family.

It is found in the cytoplasm. In terms of biological role, can catalyze the hydrolysis of ATP in the presence of single-stranded DNA, the ATP-dependent uptake of single-stranded DNA by duplex DNA, and the ATP-dependent hybridization of homologous single-stranded DNAs. It interacts with LexA causing its activation and leading to its autocatalytic cleavage. This chain is Protein RecA, found in Shewanella loihica (strain ATCC BAA-1088 / PV-4).